The sequence spans 254 residues: Activity-regulated cytoskeleton associated protein 1 (254 aa).

Belongs to the ARC/ARG3.1 family. In terms of assembly, homooligomer; homooligomerizes into virion-like capsids. Expressed in a specific population of brain neurons, named E347, that are necessary and sufficient for proper body fat storage.

The protein localises to the extracellular vesicle membrane. It is found in the synapse. In terms of biological role, master regulator of synaptic plasticity that self-assembles into virion-like capsids that encapsulate RNAs and mediate intercellular RNA transfer from motorneurons to muscles. Arc1 protein is released from motorneurons in extracellular vesicles that mediate the transfer of Arc1 mRNA into muscle cells, where Arc1 mRNA can undergo activity-dependent translation. Intercellular transfer od Arc1 mRNA is required for synaptic plasticity at the neuromuscular junction. May play a role in energy balance: required for regulation of body fat by a specific population of brain neurons, named E347, that are necessary and sufficient for proper body fat storage. The sequence is that of Activity-regulated cytoskeleton associated protein 1 from Drosophila melanogaster (Fruit fly).